Reading from the N-terminus, the 202-residue chain is Small ribosomal subunit protein uS4c (202 aa).

The disordered stretch occupies residues 20–43; it reads GLTRKTTRRNSRPGQHGDQPRKPS. One can recognise an S4 RNA-binding domain in the interval 90–152; sequence MRLDNIVFRL…ARSKQLVENY (63 aa).

This sequence belongs to the universal ribosomal protein uS4 family. Part of the 30S ribosomal subunit. Contacts protein S5. The interaction surface between S4 and S5 is involved in control of translational fidelity.

It is found in the plastid. The protein localises to the chloroplast. Functionally, one of the primary rRNA binding proteins, it binds directly to 16S rRNA where it nucleates assembly of the body of the 30S subunit. In terms of biological role, with S5 and S12 plays an important role in translational accuracy. The chain is Small ribosomal subunit protein uS4c (rps4) from Rhodomonas salina (Cryptomonas salina).